A 380-amino-acid polypeptide reads, in one-letter code: Flap endonuclease 1 (380 aa).

Residues 1–104 are N-domain; the sequence is MGIQGLAKLI…GELAKRSERR (104 aa). Arg-19 carries the symmetric dimethylarginine; by PRMT5 modification. Asp-34 is a binding site for Mg(2+). Arg-47 and Arg-70 together coordinate DNA. Lys-80 is modified (N6-acetyllysine). Asp-86 is a binding site for Mg(2+). A symmetric dimethylarginine; by PRMT5 mark is found at Arg-100 and Arg-104. Residues 122 to 253 form an I-domain region; it reads EVEKFTKRLV…KRAVDLIQKH (132 aa). Positions 158, 160, 179, and 181 each coordinate Mg(2+). Glu-158 contributes to the DNA binding site. Phosphoserine; by CDK2 is present on Ser-187. Arg-192 carries the post-translational modification Symmetric dimethylarginine; by PRMT5. At Ser-197 the chain carries Phosphoserine. Gly-231 and Asp-233 together coordinate DNA. Asp-233 serves as a coordination point for Mg(2+). Phosphoserine occurs at positions 255, 293, and 335. The interval 327–380 is disordered; it reads RLSKSRQGSTQGRLDDFFKVTGSLSSAKRKEPEPKGAAKKKAKTGAAGKFKRGK. Thr-336 is modified (phosphothreonine). The interval 336–344 is interaction with PCNA; it reads TQGRLDDFF. An N6-acetyllysine mark is found at Lys-354, Lys-375, Lys-377, and Lys-380. Positions 363–380 are enriched in basic residues; sequence AAKKKAKTGAAGKFKRGK.

The protein belongs to the XPG/RAD2 endonuclease family. FEN1 subfamily. In terms of assembly, interacts with PCNA. Three molecules of FEN1 bind to one PCNA trimer with each molecule binding to one PCNA monomer. PCNA stimulates the nuclease activity without altering cleavage specificity. The C-terminal domain binds EP300; can bind simultaneously to both PCNA and EP300. Interacts with DDX11; this interaction is direct and increases flap endonuclease activity of FEN1. Interacts with WDR4; regulating its endonuclease activity. Interacts with POLB. Mg(2+) serves as cofactor. Post-translationally, acetylated by EP300. Acetylation inhibits both endonuclease and exonuclease activity. Acetylation also reduces DNA-binding activity but does not affect interaction with PCNA or EP300. Phosphorylation upon DNA damage induces relocalization to the nuclear plasma. Phosphorylation at Ser-187 by CDK2 occurs during late S-phase and results in dissociation from PCNA. In terms of processing, methylation at Arg-192 by PRMT5 impedes Ser-187 phosphorylation and increases interaction with PCNA.

The protein localises to the nucleus. It is found in the nucleolus. The protein resides in the nucleoplasm. Its subcellular location is the mitochondrion. Structure-specific nuclease with 5'-flap endonuclease and 5'-3' exonuclease activities involved in DNA replication and repair. During DNA replication, cleaves the 5'-overhanging flap structure that is generated by displacement synthesis when DNA polymerase encounters the 5'-end of a downstream Okazaki fragment. It enters the flap from the 5'-end and then tracks to cleave the flap base, leaving a nick for ligation. Also involved in the long patch base excision repair (LP-BER) pathway, by cleaving within the apurinic/apyrimidinic (AP) site-terminated flap. Acts as a genome stabilization factor that prevents flaps from equilibrating into structures that lead to duplications and deletions. Also possesses 5'-3' exonuclease activity on nicked or gapped double-stranded DNA, and exhibits RNase H activity. Also involved in replication and repair of rDNA and in repairing mitochondrial DNA. The chain is Flap endonuclease 1 from Bos taurus (Bovine).